Here is a 338-residue protein sequence, read N- to C-terminus: Ornithine carbamoyltransferase, catabolic (338 aa).

Residues 65–68 (STRT), Gln-92, Arg-116, and 143–146 (HPTQ) contribute to the carbamoyl phosphate site. L-ornithine-binding positions include Asn-175, Asp-239, and 243 to 244 (SM). Carbamoyl phosphate contacts are provided by residues 280–281 (CL) and Arg-325.

Belongs to the aspartate/ornithine carbamoyltransferase superfamily. OTCase family.

Its subcellular location is the cytoplasm. It carries out the reaction carbamoyl phosphate + L-ornithine = L-citrulline + phosphate + H(+). Its pathway is amino-acid degradation; L-arginine degradation via ADI pathway; carbamoyl phosphate from L-arginine: step 2/2. In terms of biological role, reversibly catalyzes the transfer of the carbamoyl group from carbamoyl phosphate (CP) to the N(epsilon) atom of ornithine (ORN) to produce L-citrulline. This Treponema denticola (strain ATCC 35405 / DSM 14222 / CIP 103919 / JCM 8153 / KCTC 15104) protein is Ornithine carbamoyltransferase, catabolic.